Here is a 471-residue protein sequence, read N- to C-terminus: Putative multidrug resistance protein MdtD (471 aa).

The Periplasmic portion of the chain corresponds to 1–11 (MTDLPDSTRWQ). Residues 12-32 (LWIVAFGFFMQSLDTTIVNTA) form a helical membrane-spanning segment. The Cytoplasmic portion of the chain corresponds to 33 to 48 (LPSMAQSLGESPLHMH). The chain crosses the membrane as a helical span at residues 49 to 69 (MVIVSYVLTVAVMLPASGWLA). Over 70 to 76 (DKVGVRN) the chain is Periplasmic. Residues 77-97 (IFFTAIVLFTLGSLFCALSGT) form a helical membrane-spanning segment. The Cytoplasmic portion of the chain corresponds to 98–101 (LNEL). A helical membrane pass occupies residues 102–124 (LLARALQGVGGAMMVPVGRLTVM). Over 125 to 137 (KIVPREQYMAAMT) the chain is Periplasmic. Residues 138–158 (FVTLPGQVGPLLGPALGGLLV) form a helical membrane-spanning segment. Topologically, residues 159–164 (EYASWH) are cytoplasmic. The chain crosses the membrane as a helical span at residues 165 to 185 (WIFLINIPVGIIGAIATLMLM). The Periplasmic portion of the chain corresponds to 186–196 (PNYTMQTRRFD). The chain crosses the membrane as a helical span at residues 197 to 217 (LSGFLLLAVGMAVLTLALDGS). The Cytoplasmic portion of the chain corresponds to 218-224 (KGTGLSP). The chain crosses the membrane as a helical span at residues 225–245 (LAITGLVAVGVVALVLYLLHA). At 246 to 262 (RNNHRALFSLKLFRTRT) the chain is on the periplasmic side. The helical transmembrane segment at 263-283 (FSLGLAGSFAGRIGSGMLPFM) threads the bilayer. Residues 284–285 (TP) lie on the Cytoplasmic side of the membrane. Residues 286 to 306 (VFLQIGLGFSPFHAGLMMIPM) traverse the membrane as a helical segment. Residues 307–341 (VLGSMGMKRIVVQVVNRFGYRRVLVATTLGLSLVT) are Periplasmic-facing. Residues 342–362 (LLFMTTALLGWYYVLPFVLFL) form a helical membrane-spanning segment. Topologically, residues 363 to 395 (QGMVNSTRFSSMNTLTLKDLPDNLASSGNSLLS) are cytoplasmic. A helical membrane pass occupies residues 396-416 (MIMQLSMSIGVTIAGLLLGLF). The Periplasmic segment spans residues 417–430 (GSQHVSVDSGTTQT). The helical transmembrane segment at 431-451 (VFMYTWLSMAFIIALPAFIFA) threads the bilayer. Topologically, residues 452-471 (RVPNDTHQNVAISRRKRSAQ) are cytoplasmic.

The protein belongs to the major facilitator superfamily. TCR/Tet family.

It localises to the cell inner membrane. The polypeptide is Putative multidrug resistance protein MdtD (Escherichia coli O127:H6 (strain E2348/69 / EPEC)).